We begin with the raw amino-acid sequence, 80 residues long: Dermaseptin-DA3 (80 aa).

The signal sequence occupies residues 1-22 (MAFLKKSLFLVLFLGLVSLSIC). The propeptide occupies 23–42 (EEKRENEDEEEQEDDEQSEE). The tract at residues 24–48 (EKRENEDEEEQEDDEQSEEKRGMWS) is disordered. Positions 29–40 (EDEEEQEDDEQS) are enriched in acidic residues. Leu77 is modified (leucine amide). The propeptide occupies 79–80 (EQ).

It belongs to the frog skin active peptide (FSAP) family. Dermaseptin subfamily. As to expression, expressed by the skin glands.

The protein localises to the secreted. Possesses a potent antimicrobial activity against Gram-positive and Gram-negative bacteria. Probably acts by disturbing membrane functions with its amphipathic structure. The sequence is that of Dermaseptin-DA3 from Agalychnis dacnicolor (Giant Mexican leaf frog).